We begin with the raw amino-acid sequence, 171 residues long: L-methionine sulfoximine/L-methionine sulfone acetyltransferase (171 aa).

Residues 1 to 163 form the N-acetyltransferase domain; sequence MTIRFADKAD…DLTFMQLQLD (163 aa). Substrate contacts are provided by residues 72 to 74 and 82 to 84; these read RSF and EHS. Acetyl-CoA-binding positions include 85 to 87, 93 to 98, N124, and S133; these read VYV and GKGLGR.

Homodimer.

It carries out the reaction L-methionine sulfoximine + acetyl-CoA = N-acetyl-L-methionine sulfoximine + CoA + H(+). It catalyses the reaction L-methionine sulfone + acetyl-CoA = N-acetyl-L-methionine sulfone + CoA + H(+). In terms of biological role, plays a role in the resistance against the toxic effects of L-methionine sulfoximine (MSX), a rare amino acid which inhibits glutamine synthetase (GlnA). Catalyzes the acetylation of MSX. It can also use L-methionine sulfone (MSO). Also catalyzes the acylation of free L-amino acids using an acyl-CoA as acyl donor. This Salmonella typhimurium (strain LT2 / SGSC1412 / ATCC 700720) protein is L-methionine sulfoximine/L-methionine sulfone acetyltransferase (yncA).